We begin with the raw amino-acid sequence, 169 residues long: Peptide deformylase (169 aa).

The Fe cation site is built by cysteine 91 and histidine 133. Glutamate 134 is a catalytic residue. Histidine 137 provides a ligand contact to Fe cation.

It belongs to the polypeptide deformylase family. Fe(2+) is required as a cofactor.

It carries out the reaction N-terminal N-formyl-L-methionyl-[peptide] + H2O = N-terminal L-methionyl-[peptide] + formate. In terms of biological role, removes the formyl group from the N-terminal Met of newly synthesized proteins. Requires at least a dipeptide for an efficient rate of reaction. N-terminal L-methionine is a prerequisite for activity but the enzyme has broad specificity at other positions. The chain is Peptide deformylase from Klebsiella pneumoniae (strain 342).